The following is a 238-amino-acid chain: uncharacterized protein (238 aa).

The 114-residue stretch at 3–116 (RVIIVDDEQP…RLAKTLTRLS (114 aa)) folds into the Response regulatory domain. A 4-aspartylphosphate modification is found at Asp-54. The HTH LytTR-type domain occupies 136–237 (IPCSGHNRIF…LKSLKEKLGI (102 aa)).

This is an uncharacterized protein from Yersinia pestis.